The following is a 455-amino-acid chain: Ribulose bisphosphate carboxylase large chain (455 aa).

N6,N6,N6-trimethyllysine is present on K5. Substrate is bound by residues N114 and T164. The Proton acceptor role is filled by K166. Substrate is bound at residue K168. Mg(2+)-binding residues include K192, D194, and E195. K192 is subject to N6-carboxylysine. The active-site Proton acceptor is H285. Residues R286, H318, and S370 each coordinate substrate.

Belongs to the RuBisCO large chain family. Type I subfamily. Heterohexadecamer of 8 large chains and 8 small chains; disulfide-linked. The disulfide link is formed within the large subunit homodimers. Mg(2+) is required as a cofactor. Post-translationally, the disulfide bond which can form in the large chain dimeric partners within the hexadecamer appears to be associated with oxidative stress and protein turnover.

The protein resides in the plastid. It localises to the chloroplast. It carries out the reaction 2 (2R)-3-phosphoglycerate + 2 H(+) = D-ribulose 1,5-bisphosphate + CO2 + H2O. It catalyses the reaction D-ribulose 1,5-bisphosphate + O2 = 2-phosphoglycolate + (2R)-3-phosphoglycerate + 2 H(+). Its function is as follows. RuBisCO catalyzes two reactions: the carboxylation of D-ribulose 1,5-bisphosphate, the primary event in carbon dioxide fixation, as well as the oxidative fragmentation of the pentose substrate in the photorespiration process. Both reactions occur simultaneously and in competition at the same active site. The chain is Ribulose bisphosphate carboxylase large chain from Senna didymobotrya (Popcorn cassia).